A 368-amino-acid polypeptide reads, in one-letter code: Proteinase-activated receptor 3 (368 aa).

The first 21 residues, 1-21, serve as a signal peptide directing secretion; that stretch reads MEMKVLILVGVRLLFLPTTVC. Residues 22–37 constitute a propeptide, removed for receptor activation; the sequence is QSGMKHVSDNSALTAE. The Extracellular portion of the chain corresponds to 38 to 93; the sequence is SFNGNEHSFEEFPLSDIEGWTGATTTIKAKCPEESITTLHVNNATMGYLRSSLSTK. The N-linked (GlcNAc...) asparagine glycan is linked to asparagine 80. The helical transmembrane segment at 94–114 threads the bilayer; the sequence is VIPAIYILVFVIGVPANIVTL. Topologically, residues 115 to 123 are cytoplasmic; the sequence is WKLSSRTKS. A helical transmembrane segment spans residues 124 to 144; the sequence is ICLVIFHTNLAIADLLFCVTL. The Extracellular segment spans residues 145 to 166; that stretch reads PFKIAYHLNGNDWVFGEVMCRV. A disulfide bridge connects residues cysteine 164 and cysteine 243. Residues 167-187 form a helical membrane-spanning segment; that stretch reads TTVAFYGNMYCAILILTCMGI. The Cytoplasmic portion of the chain corresponds to 188 to 208; the sequence is NRYLATVHPFTYRKLPKRNFT. Residues 209 to 229 traverse the membrane as a helical segment; the sequence is LLMCGVVWVMVVLYMLPLAIL. Over 230-257 the chain is Extracellular; sequence KQEYHLVQPGITTCHDVHDTCESPLPFQ. The helical transmembrane segment at 258–278 threads the bilayer; that stretch reads FYYFVSLAFFGFLIPFVVSVF. Residues 279–300 lie on the Cytoplasmic side of the membrane; that stretch reads CYTTLIHKLNAQDRKWLRYIKA. The chain crosses the membrane as a helical span at residues 301–321; that stretch reads VLLILVIFTICFAPTNIILII. The Extracellular portion of the chain corresponds to 322 to 338; it reads HHANYYYSNTDSLYFMY. The helical transmembrane segment at 339–359 threads the bilayer; the sequence is LIALCLGSLNSCLDPFLYFIM. Over 360-368 the chain is Cytoplasmic; it reads SKIVDQLTS.

Belongs to the G-protein coupled receptor 1 family. Interacts with INSC/inscuteable and GPSM2. Post-translationally, a proteolytic cleavage generates a new N-terminus that functions as a tethered ligand.

The protein localises to the cell membrane. Its function is as follows. Receptor for activated thrombin coupled to G proteins that stimulate phosphoinositide hydrolysis. This Rattus norvegicus (Rat) protein is Proteinase-activated receptor 3 (F2rl2).